Reading from the N-terminus, the 125-residue chain is Thioredoxin H-type (125 aa).

The region spanning 2–112 (AEGNVFACHS…LERKVAALAA (111 aa)) is the Thioredoxin domain. Catalysis depends on nucleophile residues Cys38 and Cys41. Cys38 and Cys41 are disulfide-bonded.

It belongs to the thioredoxin family. Plant H-type subfamily.

It is found in the cytoplasm. Its function is as follows. Participates in various redox reactions through the reversible oxidation of the active center dithiol to a disulfide. The H form is known to activate a number of cytosolic enzymes. The polypeptide is Thioredoxin H-type (SB09) (Picea mariana (Black spruce)).